Here is a 254-residue protein sequence, read N- to C-terminus: Cell division protein ZapD (254 aa).

This sequence belongs to the ZapD family. Interacts with FtsZ.

The protein resides in the cytoplasm. Cell division factor that enhances FtsZ-ring assembly. Directly interacts with FtsZ and promotes bundling of FtsZ protofilaments, with a reduction in FtsZ GTPase activity. The sequence is that of Cell division protein ZapD from Idiomarina loihiensis (strain ATCC BAA-735 / DSM 15497 / L2-TR).